Reading from the N-terminus, the 528-residue chain is Serine/threonine-protein kinase akt-2 (528 aa).

One can recognise a PH domain in the interval 12 to 115; that stretch reads DIVIESWLHK…WIEAIQAVSS (104 aa). Positions 121 to 153 are disordered; that stretch reads ENAGNTSMQEEDTNGNPSGESDVNMDATSTRSD. A compositionally biased stretch (polar residues) spans 123 to 153; sequence AGNTSMQEEDTNGNPSGESDVNMDATSTRSD. In terms of domain architecture, Protein kinase spans 180–437; sequence FDFLKVLGQG…AREVSRAEFF (258 aa). ATP is bound by residues 186–194 and Lys-209; that span reads LGQGTFGKV. Asp-303 acts as the Proton acceptor in catalysis. Positions 438 to 515 constitute an AGC-kinase C-terminal domain; the sequence is KDVDWEATLR…YYVSGSLERS (78 aa).

The protein belongs to the protein kinase superfamily. AGC Ser/Thr protein kinase family. RAC subfamily. As to quaternary structure, interacts with pdk-1, sgk-1, akt-1 and daf-16. Part of a complex containing sgk-1, akt-1 and akt-2. Mg(2+) is required as a cofactor. In terms of tissue distribution, expressed in neurons, muscle cells of the pharynx, rectal gland cells, and spermatheca.

The catalysed reaction is L-seryl-[protein] + ATP = O-phospho-L-seryl-[protein] + ADP + H(+). The enzyme catalyses L-threonyl-[protein] + ATP = O-phospho-L-threonyl-[protein] + ADP + H(+). Its activity is regulated as follows. Phosphorylated and activated by pdk-1. Functionally, acts downstream of PI3 kinase age-1 and kinase pdk-1 in the daf-2/insulin receptor-like transduction pathway. Essential role in regulating developmental arrest at the dauer stage. Phosphorylates Forkhead-related daf-16 and the longevity-promoting skn-1 transcription factors, which inhibits their entry into the nucleus and antagonizes their functions. Role in immune function and pathogen resistance. Downstream of age-1 and together with akt-1 and sgk-1, promotes cell survival during embryonic development. Plays a role in maintaining the gonadal basement membrane through antagonizing akt-1 activity. In Caenorhabditis elegans, this protein is Serine/threonine-protein kinase akt-2.